The following is a 162-amino-acid chain: SsrA-binding protein (162 aa).

The span at 137–154 shows a compositional bias: basic and acidic residues; sequence HDKREDTKAREWDREKAR. The disordered stretch occupies residues 137–162; the sequence is HDKREDTKAREWDREKARIMKNKHRG.

Belongs to the SmpB family.

It is found in the cytoplasm. Required for rescue of stalled ribosomes mediated by trans-translation. Binds to transfer-messenger RNA (tmRNA), required for stable association of tmRNA with ribosomes. tmRNA and SmpB together mimic tRNA shape, replacing the anticodon stem-loop with SmpB. tmRNA is encoded by the ssrA gene; the 2 termini fold to resemble tRNA(Ala) and it encodes a 'tag peptide', a short internal open reading frame. During trans-translation Ala-aminoacylated tmRNA acts like a tRNA, entering the A-site of stalled ribosomes, displacing the stalled mRNA. The ribosome then switches to translate the ORF on the tmRNA; the nascent peptide is terminated with the 'tag peptide' encoded by the tmRNA and targeted for degradation. The ribosome is freed to recommence translation, which seems to be the essential function of trans-translation. In Aeromonas salmonicida (strain A449), this protein is SsrA-binding protein.